Reading from the N-terminus, the 1701-residue chain is DDB1- and CUL4-associated factor homolog 1 (1701 aa).

The segment covering 224–245 (HAEQSTSNGTSIPSIKITSVDG) has biased composition (polar residues). Disordered regions lie at residues 224-269 (HAEQ…RRTE), 883-906 (DRPA…GNNF), and 932-961 (RPSN…TPTL). The region spanning 851–883 (NQAELLQLIHDHLLKSKLDSVAAMLKSEAKLPD) is the LisH domain. The segment covering 888–906 (RSINTPILNKPLPSSGNNF) has biased composition (polar residues). WD repeat units follow at residues 1086-1125 (DHDE…DEGH), 1128-1169 (CHGS…QRVH), 1171-1210 (YRED…DTYL), and 1215-1252 (GLQY…HVFD). Short sequence motifs (DWD box) lie at residues 1237 to 1245 (LLWDVRKKN) and 1275 to 1282 (EVYDIRTF). Disordered stretches follow at residues 1384–1559 (IGRL…DINL), 1566–1585 (EARV…PVDP), and 1641–1701 (LVRG…DDEA). Acidic residues-rich tracts occupy residues 1390–1423 (NEDE…DEEI) and 1451–1461 (DDNDTLDDLDF). The span at 1468-1479 (IIRRQAQRRRQR) shows a compositional bias: basic residues. Composition is skewed to acidic residues over residues 1494–1512 (EGSD…DPDF) and 1520–1543 (DLVD…DDDS). A compositionally biased stretch (basic and acidic residues) spans 1567-1581 (ARVVENEGNNERPAR). The span at 1667–1678 (DTDEYQSEEEEI) shows a compositional bias: acidic residues.

This sequence belongs to the VPRBP/DCAF1 family. As to quaternary structure, component of the cul4-rbx1-ddb1-dcaf1 E3 ubiquitin-protein ligase complex.

Its subcellular location is the nucleus. The protein operates within protein modification; protein ubiquitination. Its function is as follows. Component of the cul4-rbx1-ddb1-dcaf1 E3 ubiquitin-protein ligase complex, dcaf1 may function as the substrate recognition module within this complex. The sequence is that of DDB1- and CUL4-associated factor homolog 1 (dcaf-1) from Caenorhabditis elegans.